Reading from the N-terminus, the 419-residue chain is MNRHLWKSQLCEMVQPSGGPAADQDVLGEESPLGKPAMLHLPSEQGAPETLQRCLEENQELRDAIRQSNQILRERCEELLHFQASQREEKEFLMCKFQEARKLVERLGLEKLDLKRQKEQALREVEHLKRCQQQMAEDKASVKAQVTSLLGELQESQSRLEAATKECQALEGRARAASEQARQLESEREALQQQHSVQVDQLRMQGQSVEAALRMERQAASEEKRKLAQLQVAYHQLFQEYDNHIKSSVVGSERKRGMQLEDLKQQLQQAEEALVAKQEVIDKLKEEAEQHKIVMETVPVLKAQADIYKADFQAERQAREKLAEKKELLQEQLEQLQREYSKLKASCQESARIEDMRKRHVEVSQAPLPPAPAYLSSPLALPSQRRSPPEEPPDFCCPKCQYQAPDMDTLQIHVMECIE.

The interval 1–197 is required for interaction with and ubiquitination by MARCHF2; that stretch reads MNRHLWKSQL…REALQQQHSV (197 aa). S31 and S43 each carry phosphoserine; by IKKB. The tract at residues 44–111 is interaction with CHUK/IKBKB; it reads EQGAPETLQR…KLVERLGLEK (68 aa). Residues 49 to 356 adopt a coiled-coil conformation; it reads ETLQRCLEEN…CQESARIEDM (308 aa). S68 carries the post-translational modification Phosphoserine. Residue S85 is modified to Phosphoserine; by ATM. Glycyl lysine isopeptide (Lys-Gly) (interchain with G-Cter in ubiquitin) cross-links involve residues K111, K139, K143, K226, K246, and K264. The tract at residues 150–257 is interaction with TANK; sequence LGELQESQSR…SVVGSERKRG (108 aa). A ubiquitin-binding (UBAN) region spans residues 242–350; the sequence is DNHIKSSVVG…SKLKASCQES (109 aa). The tract at residues 246 to 365 is self-association; it reads KSSVVGSERK…MRKRHVEVSQ (120 aa). Residues 251-419 are required for interaction with TNFAIP3; sequence GSERKRGMQL…LQIHVMECIE (169 aa). K277 is covalently cross-linked (Glycyl lysine isopeptide (Lys-Gly) (interchain with G-Cter in SUMO); alternate). K277 is covalently cross-linked (Glycyl lysine isopeptide (Lys-Gly) (interchain with G-Cter in ubiquitin); alternate). Glycyl lysine isopeptide (Lys-Gly) (interchain with G-Cter in ubiquitin) cross-links involve residues K283, K285, K292, and K302. A Glycyl lysine isopeptide (Lys-Gly) (interchain with G-Cter in SUMO); alternate cross-link involves residue K309. A Glycyl lysine isopeptide (Lys-Gly) (interchain with G-Cter in ubiquitin); alternate cross-link involves residue K309. Residues K321 and K325 each participate in a glycyl lysine isopeptide (Lys-Gly) (interchain with G-Cter in ubiquitin) cross-link. Residues 322-343 form a leucine-zipper region; sequence LAEKKELLQEQLEQLQREYSKL. A Glycyl lysine isopeptide (Lys-Gly) (interchain with G-Cter in ubiquitin and interchain with MARCHF2) cross-link involves residue K326. Residues 358–395 form a disordered region; that stretch reads KRHVEVSQAPLPPAPAYLSSPLALPSQRRSPPEEPPDF. The segment covering 373–386 has biased composition (low complexity); the sequence is AYLSSPLALPSQRR. The residue at position 376 (S376) is a Phosphoserine; by IKKB. The segment at 382-419 is interaction with CYLD; that stretch reads PSQRRSPPEEPPDFCCPKCQYQAPDMDTLQIHVMECIE. Phosphoserine is present on S387. The segment at 389–419 adopts a CCHC NOA-type zinc-finger fold; sequence PEEPPDFCCPKCQYQAPDMDTLQIHVMECIE. A Zn(2+)-binding site is contributed by C397. A Glycyl lysine isopeptide (Lys-Gly) (interchain with G-Cter in ubiquitin) cross-link involves residue K399. Zn(2+)-binding residues include C400, H413, and C417.

In terms of assembly, homodimer; disulfide-linked. Component of the I-kappa-B-kinase (IKK) core complex consisting of CHUK, IKBKB and IKBKG; probably four alpha/CHUK-beta/IKBKB dimers are associated with four gamma/IKBKG subunits. The IKK core complex seems to associate with regulatory or adapter proteins to form a IKK-signalosome holo-complex. The IKK complex associates with TERF2IP/RAP1, leading to promote IKK-mediated phosphorylation of RELA/p65. Part of a complex composed of NCOA2, NCOA3, CHUK/IKKA, IKBKB, IKBKG and CREBBP. Interacts with COPS3, CYLD, NALP2, TRPC4AP and PIDD1. Interacts with ATM; the complex is exported from the nucleus. Interacts with TRAF6. Interacts with IKBKE. Interacts with TANK; the interaction is enhanced by IKBKE and TBK1. Part of a ternary complex consisting of TANK, IKBKB and IKBKG. Interacts with ZFAND5. Interacts with RIPK2. Interacts with TNIP1 and TNFAIP3; TNIP1 facilitates the TNFAIP3-mediated de-ubiquitination of IKBKG. Interacts with TNFAIP3; the interaction is induced by TNF stimulation and by polyubiquitin. Binds (via UBAN region) polyubiquitin; binds both 'Lys-63'-linked and linear polyubiquitin, with higher affinity for linear ubiquitin. Interacts with NLRP10. Interacts with TANK; this interaction increases in response to DNA damage. Interacts with USP10; this interaction increases in response to DNA damage. Interacts with ZC3H12A; this interaction increases in response to DNA damage. Interacts with IFIT5; the interaction synergizes the recruitment of IKK to MAP3K7 and enhances IKK phosphorylation. Interacts with TRIM29; this interaction induces IKBKG/NEMO ubiquitination and proteolytic degradation. Interacts with TRIM13; this interaction leads to IKBKG/NEMO ubiquitination. Interacts with ARFIP2. Interacts with RIPK1. Interacts with (ubiquitinated) BCL10; interaction with polyubiquitinated BCL10 via both 'Lys-63'-linked and linear ubiquitin is required for TCR-induced NF-kappa-B activation. Interacts with MARCHF2; during the late stages of macrophage viral and bacterial infection; the interaction leads to ubiquitination and degradation of IKBKG/NEMO. (Microbial infection) Interacts with Molluscum contagiosum virus protein MC005; this interaction inhibits NF-kappa-B activation. As to quaternary structure, (Microbial infection) Interacts with HTLV-1 Tax oncoprotein; the interaction activates IKBKG. In terms of assembly, (Microbial infection) Interacts with Shigella flexneri ipah9.8; the interaction promotes TNIP1-dependent 'Lys-27'-linked polyubiquitination of IKBKG which perturbs NF-kappa-B activation during bacterial infection. (Microbial infection) Interacts with SARS coronavirus-2/SARS-CoV-2 virus protein ORF9B (via N-terminus); the interaction inhibits polyubiquitination through 'Lys-63' and NF-kappa-B activation. In terms of processing, phosphorylation at Ser-68 attenuates aminoterminal homodimerization. Polyubiquitinated on Lys-285 via 'Lys-63'-linked ubiquitin; the ubiquitination is mediated downstream of NOD2 and RIPK2 and probably plays a role in signaling by facilitating interactions with ubiquitin domain-containing proteins and activates the NF-kappa-B pathway. Polyubiquitinated on Lys-285 and Lys-399 through 'Lys-63'-linked ubiquitin; the ubiquitination is mediated by BCL10, MALT1 and TRAF6 and probably plays a role in signaling by facilitating interactions with ubiquitin domain-containing proteins and activates the NF-kappa-B pathway. Monoubiquitinated on Lys-277 and Lys-309; promotes nuclear export. Polyubiquitinated through 'Lys-27' by TRIM23; involved in antiviral innate and inflammatory responses. Linear polyubiquitinated on Lys-111, Lys-143, Lys-226, Lys-246, Lys-264, Lys-277, Lys-285, Lys-292, Lys-302, Lys-309 and Lys-326; the head-to-tail polyubiquitination is mediated by the LUBAC complex and plays a key role in NF-kappa-B activation. Deubiquitinated by USP10 in a TANK-dependent and -independent manner, leading to the negative regulation of NF-kappa-B signaling upon DNA damage. Ubiquitinated at Lys-326 by MARCHF2 following bacterial and viral infection which leads to its degradation. Polyubiquitinated via 'Lys-29'-linked ubiquitin; leading to lysosomal degradation. Post-translationally, sumoylated on Lys-277 and Lys-309 with SUMO1; the modification results in phosphorylation of Ser-85 by ATM leading to a replacement of the sumoylation by mono-ubiquitination on these residues. In terms of processing, neddylated by TRIM40, resulting in stabilization of NFKBIA and down-regulation of NF-kappa-B activity. (Microbial infection) Cleaved by hepatitis A virus (HAV) protease 3C allowing the virus to disrupt the host innate immune signaling. Post-translationally, (Microbial infection) Deubiquitinated by Epstein-Barr virus BPLF1 on both 'Lys-48' and 'Lys-63'-linked ubiquitin chains; leading to NF-kappa-B signaling inhibition. In terms of processing, (Microbial infection) Polyubiquitinated on Lys-309 and Lys-321 via 'Lys-27'-linked ubiquitin by Shigella flexneri E3 ubiquitin-protein ligase ipah9.8, leading to its degradation by the proteasome. (Microbial infection) Polyubiquitination through 'Lys-63' is interrupted by interaction with SARS coronavirus-2/SARS-CoV-2 virus protein ORF9B which inhibits the NF-kappa-B pathway. In terms of tissue distribution, heart, brain, placenta, lung, liver, skeletal muscle, kidney and pancreas.

The protein localises to the cytoplasm. Its subcellular location is the nucleus. Regulatory subunit of the IKK core complex which phosphorylates inhibitors of NF-kappa-B thus leading to the dissociation of the inhibitor/NF-kappa-B complex and ultimately the degradation of the inhibitor. Its binding to scaffolding polyubiquitin plays a key role in IKK activation by multiple signaling receptor pathways. Can recognize and bind both 'Lys-63'-linked and linear polyubiquitin upon cell stimulation, with a much higher affinity for linear polyubiquitin. Could be implicated in NF-kappa-B-mediated protection from cytokine toxicity. Essential for viral activation of IRF3. Involved in TLR3- and IFIH1-mediated antiviral innate response; this function requires 'Lys-27'-linked polyubiquitination. Its function is as follows. (Microbial infection) Also considered to be a mediator for HTLV-1 Tax oncoprotein activation of NF-kappa-B. This Homo sapiens (Human) protein is NF-kappa-B essential modulator.